The primary structure comprises 323 residues: Cyclin-H (323 aa).

The residue at position 5 (serine 5) is a Phosphoserine; by CDK8. Phosphoserine is present on serine 132. Residues 295–323 (KGYEDDDYVSKKPKQEEEEWTDDDLVDSL) form a disordered region. Serine 304 is modified (phosphoserine; by CDK8). Residues 310 to 323 (EEEEWTDDDLVDSL) show a composition bias toward acidic residues. At threonine 315 the chain carries Phosphothreonine. The residue at position 322 (serine 322) is a Phosphoserine.

The protein belongs to the cyclin family. Cyclin C subfamily. As to quaternary structure, associates primarily with CDK7 and MAT1 to form the CAK complex. CAK can further associate with the core-TFIIH to form the TFIIH basal transcription factor. In terms of tissue distribution, expressed in both the germinal and somatic cells of the testis.

Its subcellular location is the nucleus. In terms of biological role, regulates CDK7, the catalytic subunit of the CDK-activating kinase (CAK) enzymatic complex. CAK activates the cyclin-associated kinases CDK1, CDK2, CDK4 and CDK6 by threonine phosphorylation. CAK complexed to the core-TFIIH basal transcription factor activates RNA polymerase II by serine phosphorylation of the repetitive C-terminal domain (CTD) of its large subunit (POLR2A), allowing its escape from the promoter and elongation of the transcripts. Involved in cell cycle control and in RNA transcription by RNA polymerase II. Its expression and activity are constant throughout the cell cycle. This is Cyclin-H (Ccnh) from Mus musculus (Mouse).